The primary structure comprises 338 residues: Selenocysteine methyltransferase (338 aa).

Residues 1 to 327 form the Hcy-binding domain; the sequence is MSSPLITDFL…DTIRGIYKIL (327 aa). Zn(2+)-binding residues include cysteine 245, cysteine 312, and cysteine 313.

In terms of assembly, monomer. It depends on Zn(2+) as a cofactor. Present in all tissues tested.

The catalysed reaction is S-methyl-L-methionine + L-selenocysteine = Se-methyl-L-selenocysteine + L-methionine + H(+). Catalyzes the methylation of selenocysteine with S-methylmethionine as donor. Does not methylate cysteine. In Astragalus bisulcatus (Two-grooved milkvetch), this protein is Selenocysteine methyltransferase (SMTA).